The chain runs to 2161 residues: Voltage-dependent L-type calcium channel subunit alpha-1D (2161 aa).

Disordered regions lie at residues 1-21 (MMMMMMMKKMQHQRQQQADHA), 30-49 (TRLPLSGEGPTSQPNSSKQT), and 64-100 (KAAQTMSTSAPPPVGSLSQRKRQQYAKSKKQGNSSNS). Over 1–126 (MMMMMMMKKM…RACISIVEWK (126 aa)) the chain is Cytoplasmic. Polar residues predominate over residues 38–49 (GPTSQPNSSKQT). The segment covering 82 to 93 (QRKRQQYAKSKK) has biased composition (basic residues). Residues 113 to 409 (NPIRRACISI…LVLGVLSGEF (297 aa)) form an I repeat. The chain crosses the membrane as a helical span at residues 127–145 (PFDIFILLAIFANCVALAI). Over 146 to 163 (YIPFPEDDSNSTNHNLEK) the chain is Extracellular. Asn-155 carries N-linked (GlcNAc...) asparagine glycosylation. Residues 164–183 (VEYAFLIIFTVETFLKIIAY) traverse the membrane as a helical segment. At 184 to 195 (GLLLHPNAYVRN) the chain is on the cytoplasmic side. The helical transmembrane segment at 196-214 (GWNLLDFVIVIVGLFSVIL) threads the bilayer. The Extracellular portion of the chain corresponds to 215–235 (EQLTKETEGGNHSSGKSGGFD). An N-linked (GlcNAc...) asparagine glycan is attached at Asn-225. A helical membrane pass occupies residues 236-254 (VKALRAFRVLRPLRLVSGV). Residues 255–273 (PSLQVVLNSIIKAMVPLLH) lie on the Cytoplasmic side of the membrane. Residues 274-293 (IALLVLFVIIIYAIIGLELF) traverse the membrane as a helical segment. Residues 294–381 (IGKMHKTCFF…WMNDAMGFEL (88 aa)) lie on the Extracellular side of the membrane. N-linked (GlcNAc...) asparagine glycosylation is present at Asn-329. Glu-364 serves as a coordination point for Ca(2+). Residues 382 to 406 (PWVYFVSLVIFGSFFVLNLVLGVLS) form a helical membrane-spanning segment. The Cytoplasmic portion of the chain corresponds to 407–523 (GEFSKEREKA…RRCRAAVKSV (117 aa)). The segment at 429-446 (QQLEEDLKGYLDWITQAE) is binding to the beta subunit. The tract at residues 449–482 (DPENEEEGGEEGKRNTSMPTSETESVNTENVSGE) is disordered. Positions 463–479 (NTSMPTSETESVNTENV) are enriched in polar residues. The stretch at 509 to 755 (NRFNRRRCRA…VFLAIAVDNL (247 aa)) is one II repeat. Residues 524 to 543 (TFYWLVIVLVFLNTLTISSE) form a helical membrane-spanning segment. Residues 544–558 (HYNQPDWLTQIQDIA) are Extracellular-facing. The chain crosses the membrane as a helical span at residues 559 to 577 (NKVLLALFTCEMLVKMYSL). At 578-585 (GLQAYFVS) the chain is on the cytoplasmic side. Residues 586 to 604 (LFNRFDCFVVCGGITETIL) traverse the membrane as a helical segment. At 605-614 (VELEIMSPLG) the chain is on the extracellular side. Residues 615 to 633 (ISVFRCVRLLRIFKVTRHW) form a helical membrane-spanning segment. Residues 634 to 652 (TSLSNLVASLLNSMKSIAS) are Cytoplasmic-facing. A helical transmembrane segment spans residues 653–673 (LLLLLFLFIIIFSLLGMQLFG). Topologically, residues 674–727 (GKFNFDETQTKRSTFDNFPQALLTVFQILTGEDWNAVMYDGIMAYGGPSSSGMI) are extracellular. Glu-705 lines the Ca(2+) pocket. Residues 728–752 (VCIYFIILFICGNYILLNVFLAIAV) traverse the membrane as a helical segment. At 753–886 (DNLADAESLN…VGCHKLINHH (134 aa)) the chain is on the cytoplasmic side. Residues 766–790 (KEEAEEKERKKIARKESLENKKNNK) are compositionally biased toward basic and acidic residues. Positions 766–850 (KEEAEEKERK…AGPRPRRISE (85 aa)) are disordered. The span at 791-802 (PEVNQIANSDNK) shows a compositional bias: polar residues. The span at 825–838 (VGEEEEEEEEDEPE) shows a compositional bias: acidic residues. An III repeat occupies 873 to 1155 (NPIRVGCHKL…IFVGFVIVTF (283 aa)). A helical membrane pass occupies residues 887–905 (IFTNLILVFIMLSSAALAA). The Extracellular segment spans residues 906 to 921 (EDPIRSHSFRNTILGY). The helical transmembrane segment at 922–941 (FDYAFTAIFTVEILLKMTTF) threads the bilayer. Residues 942-953 (GAFLHKGAFCRN) are Cytoplasmic-facing. The helical transmembrane segment at 954–972 (YFNLLDMLVVGVSLVSFGI) threads the bilayer. Over 973-978 (QSSAIS) the chain is Extracellular. Residues 979-998 (VVKILRVLRVLRPLRAINRA) traverse the membrane as a helical segment. The Cytoplasmic segment spans residues 999–1017 (KGLKHVVQCVFVAIRTIGN). The chain crosses the membrane as a helical span at residues 1018-1037 (IMIVTTLLQFMFACIGVQLF). At 1038–1127 (KGKFYRCTDE…IGPIYNHRVE (90 aa)) the chain is on the extracellular side. The tract at residues 1075-1165 (RIWQNSDFNF…QEQGEKEYKN (91 aa)) is dihydropyridine binding. Glu-1101 serves as a coordination point for Ca(2+). The chain crosses the membrane as a helical span at residues 1128–1148 (ISIFFIIYIIIVAFFMMNIFV). Residues 1149-1205 (GFVIVTFQEQGEKEYKNCELDKNQRQCVEYALKARPLRRYIPKNPYQYKFWYVVNSS) are Cytoplasmic-facing. Residues 1192-1467 (NPYQYKFWYV…LFVAVIMDNF (276 aa)) form an IV repeat. The helical transmembrane segment at 1206–1224 (PFEYMMFVLIMLNTLCLAM) threads the bilayer. Over 1225–1239 (QHYEQSKMFNDAMDI) the chain is Extracellular. Residues 1240-1259 (LNMVFTGVFTVEMVLKVIAF) form a helical membrane-spanning segment. Over 1260 to 1266 (KPKGYFS) the chain is Cytoplasmic. Residues 1267 to 1288 (DAWNTFDSLIVIGSIIDVALSE) traverse the membrane as a helical segment. Over 1289–1313 (ADPTESENVPVPTATPGNSEESNRI) the chain is Extracellular. The chain crosses the membrane as a helical span at residues 1314–1333 (SITFFRLFRVMRLVKLLSRG). The Cytoplasmic segment spans residues 1334-1352 (EGIRTLLWTFIKSFQALPY). Residues 1353–1372 (VALLIAMLFFIYAVIGMQMF) traverse the membrane as a helical segment. Topologically, residues 1373–1439 (GKVAMRDNNQ…GEEYTCGSNF (67 aa)) are extracellular. The segment at 1420-1486 (LCDPESDYNP…LGPHHLDEFK (67 aa)) is dihydropyridine binding. The segment at 1432-1475 (EYTCGSNFAIVYFISFYMLCAFLIINLFVAVIMDNFDYLTRDWS) is phenylalkylamine binding. A helical membrane pass occupies residues 1440 to 1464 (AIVYFISFYMLCAFLIINLFVAVIM). The Cytoplasmic segment spans residues 1465–2161 (DNFDYLTRDW…ADEMICITTL (697 aa)). Disordered stretches follow at residues 1659 to 1678 (SCDLQDDEPEETKREEEDDV), 1684 to 1804 (ALLG…VKRT), 1872 to 1919 (PGRN…ASHR), and 2108 to 2152 (NGNV…EDLA). Residues 1745 to 1763 (SIGKQVPTSTNANLNNANM) are compositionally biased toward polar residues. The span at 1779 to 1797 (HVSENGHHSSHKHDREPQR) shows a compositional bias: basic and acidic residues. Over residues 2138-2152 (SDEEPDPGRDEEDLA) the composition is skewed to acidic residues.

Belongs to the calcium channel alpha-1 subunit (TC 1.A.1.11) family. CACNA1D subfamily. As to quaternary structure, voltage-dependent calcium channels are multisubunit complexes, consisting of alpha-1, alpha-2, beta and delta subunits in a 1:1:1:1 ratio. The channel activity is directed by the pore-forming and voltage-sensitive alpha-1 subunit. In many cases, this subunit is sufficient to generate voltage-sensitive calcium channel activity. The auxiliary subunits beta and alpha-2/delta linked by a disulfide bridge regulate the channel activity. Channel activity is further modulated, depending on the presence of specific delta subunit isoforms. Interacts (via IQ domain) with CABP1 and CABP4 in a calcium independent manner. Interacts with RIMBP2. As to expression, expressed in pancreatic islets and in brain, where it has been seen in cerebral cortex, hippocampus, basal ganglia, habenula and thalamus. Expressed in the small cell lung carcinoma cell line SCC-9. No expression in skeletal muscle.

The protein localises to the membrane. It carries out the reaction Ca(2+)(in) = Ca(2+)(out). Voltage-sensitive calcium channels (VSCC) mediate the entry of calcium ions into excitable cells and are also involved in a variety of calcium-dependent processes, including muscle contraction, hormone or neurotransmitter release, gene expression, cell motility, cell division and cell death. The isoform alpha-1D gives rise to L-type calcium currents. Long-lasting (L-type) calcium channels belong to the 'high-voltage activated' (HVA) group. They are blocked by dihydropyridines (DHP), phenylalkylamines, and by benzothiazepines. In terms of biological role, voltage-sensitive calcium channels (VSCC) mediate the entry of calcium ions into excitable cells and are also involved in a variety of calcium-dependent processes, including muscle contraction, hormone or neurotransmitter release, gene expression, cell motility, cell division and cell death. The isoform alpha-1D gives rise to L-type calcium currents. This Homo sapiens (Human) protein is Voltage-dependent L-type calcium channel subunit alpha-1D (CACNA1D).